A 293-amino-acid polypeptide reads, in one-letter code: MNRQSLFILTGLSGSGKSTAMEAFEDAGYYCVDNMPIELLPKFLDLPLDSDTDINGFAFVMDIRAKQFLSQFPSVLESLGKNGHIPEIIFLEADENILLKRYSQTRRHHPAGQDKSLIESIKSEKSLMLPIRKISKRIIDTSNYNVHQLKAEIRNIAHHHALKPVSMKINLLSFGFKYGIPTDADLVVDMRFLSNPFFVPELKALNGRTKEVKDFVLETIQAKTFLKKYLGLLDYLIPLYTLEGKAYLTIAVGCTGGRHRSVAIAENIFEHLSQRGFEPGIIHRDIDRDTKEL.

11–18 (GLSGSGKS) provides a ligand contact to ATP. 62-65 (DIRA) is a GTP binding site.

Belongs to the RapZ-like family.

Displays ATPase and GTPase activities. This chain is Nucleotide-binding protein HRM2_27900, found in Desulforapulum autotrophicum (strain ATCC 43914 / DSM 3382 / VKM B-1955 / HRM2) (Desulfobacterium autotrophicum).